A 489-amino-acid chain; its full sequence is Retinoblastoma-binding protein 5 homolog (489 aa).

WD repeat units lie at residues 22–63 (DCIS…KIIS), 64–103 (AHVH…LEHK), 147–187 (DSDG…VVAS), 195–234 (SSAT…TLGK), 248–290 (VNKT…KILH), and 292–330 (TKGE…NWSA). The tract at residues 451-489 (DVSLPDAPTDETHPLISSKASKDKQQPVGGKKAAGRTKK) is disordered.

In terms of assembly, core component of several methyltransferase-containing complexes. Component of the SET1 complex, composed at least of the catalytic subunit Set1, wds/WDR5, Wdr82, Rbbp5, ash2, Cfp1/CXXC1, hcf and Dpy-30L1. Component of the MLL3/4 complex composed at least of the catalytic subunit trr, ash2, Rbbp5, Dpy-30L1, wds, hcf, ptip, Pa1, Utx, Lpt and Ncoa6.

The protein localises to the nucleus. Functionally, component of the SET1 complex that specifically di- and trimethylates 'Lys-4' of histone H3 and of the MLL3/4 complex which also methylates histone H3 'Lys-4'. The protein is Retinoblastoma-binding protein 5 homolog of Drosophila melanogaster (Fruit fly).